The chain runs to 336 residues: Protein-arginine N-acetylglucosaminyltransferase SseK1 (336 aa).

The N-beta-linked (GlcNAc) arginine; by autocatalysis glycan is linked to arginine 24. Residues 50-52 and tyrosine 74 contribute to the UDP-N-acetyl-alpha-D-glucosamine site; that span reads QWF. Residue arginine 152 is glycosylated (N-beta-linked (GlcNAc) arginine; by autocatalysis). Positions 223 to 225 match the DXD motif motif; the sequence is DAD. 224–225 lines the UDP-N-acetyl-alpha-D-glucosamine pocket; that stretch reads AD. Position 225 (aspartate 225) interacts with Mn(2+). Glutamate 255 acts as the Proton acceptor in catalysis. Mn(2+) is bound by residues asparagine 322 and serine 324. Residues serine 324 and serine 329 each contribute to the UDP-N-acetyl-alpha-D-glucosamine site. Arginine 333 carries an N-beta-linked (GlcNAc) arginine; by autocatalysis glycan.

It belongs to the glycosyltransferase NleB family. The cofactor is Mn(2+). Auto-glycosylated: arginine GlcNAcylation is required for activity toward death domain-containing host target proteins.

Its subcellular location is the secreted. It is found in the host cytoplasm. The protein resides in the host cytosol. It catalyses the reaction L-arginyl-[protein] + UDP-N-acetyl-alpha-D-glucosamine = N(omega)-(N-acetyl-beta-D-glucosaminyl)-L-arginyl-[protein] + UDP + H(+). Its activity is regulated as follows. Protein-arginine N-acetylglucosaminyltransferase activity is inhibited by 100066N compound (flavone analog) and 102644N compound (a substituted isoxazole). Protein-arginine N-acetylglucosaminyltransferase effector that disrupts TNF signaling in infected cells, including NF-kappa-B signaling, apoptosis and necroptosis. Acts by catalyzing the transfer of a single N-acetylglucosamine (GlcNAc) to a conserved arginine residue in the death domain of host proteins TRADD and, to a lower extent, FADD: arginine GlcNAcylation prevents homotypic/heterotypic death domain interactions and assembly of the oligomeric TNF-alpha receptor complex, thereby disrupting TNF signaling. Also acts on host proteins without a death domain: catalyzes arginine GlcNAcylation of host GAPDH protein, thereby preventing GAPDH interaction with TRAF2, leading to inhibit NF-kappa-B signaling. Catalyzes GlcNAcylation of host tubulin-folding cofactor TBCB, thereby promoting microtubule stability. Also mediates auto-GlcNAcylation, which is required for activity toward death domain-containing host target proteins. This is Protein-arginine N-acetylglucosaminyltransferase SseK1 from Salmonella enteritidis (strain 2009K0958).